The sequence spans 339 residues: Serine/threonine-protein kinase SRK2J (339 aa).

The region spanning 4–260 (YEMVKDLGFG…LKEIKSHAWF (257 aa)) is the Protein kinase domain. Residues 10–18 (LGFGNFGLA) and lysine 33 contribute to the ATP site. Catalysis depends on aspartate 123, which acts as the Proton acceptor. A disordered region spans residues 308–339 (SRPVESLGSDKKDDDEEEYLDANDEEWYDDYA). Over residues 320 to 339 (DDDEEEYLDANDEEWYDDYA) the composition is skewed to acidic residues.

This sequence belongs to the protein kinase superfamily. Ser/Thr protein kinase family. In terms of tissue distribution, expressed in seedlings.

The enzyme catalyses L-seryl-[protein] + ATP = O-phospho-L-seryl-[protein] + ADP + H(+). The catalysed reaction is L-threonyl-[protein] + ATP = O-phospho-L-threonyl-[protein] + ADP + H(+). The polypeptide is Serine/threonine-protein kinase SRK2J (SRK2J) (Arabidopsis thaliana (Mouse-ear cress)).